We begin with the raw amino-acid sequence, 88 residues long: Metastasis-suppressor KiSS-1 (88 aa).

Residues 1 to 13 (SVENSRPTGQQLE) show a composition bias toward polar residues. Residues 1–88 (SVENSRPTGQ…REKDLPNYNW (88 aa)) form a disordered region. Low complexity predominate over residues 33–55 (SATARLSRRGASLSSPAESSGSP). Positions 78-88 (QREKDLPNYNW) are enriched in basic and acidic residues. Tyr86 is modified (phosphotyrosine).

It belongs to the KISS1 family. In the hypothalamus, expression increases with puberty in both male and female monkeys. Robust expression in the region of the arcuate nucleus (ARC).

It localises to the secreted. Its function is as follows. Metastasis suppressor protein. May regulate events downstream of cell-matrix adhesion, perhaps involving cytoskeletal reorganization. Generates a C-terminally amidated peptide, metastin which functions as the endogenous ligand of the G-protein coupled receptor GPR54. The receptor is essential for normal gonadotropin-released hormone physiology and for puberty. The hypothalamic KiSS1/GPR54 system is a pivotal factor in central regulation of the gonadotropic axis at puberty and in adulthood. This chain is Metastasis-suppressor KiSS-1 (KISS1), found in Macaca mulatta (Rhesus macaque).